The sequence spans 214 residues: MSTKVPIYLKRGSRKGKKEKLRDLLSSDMISPPLGDFRHTIHIGSGGGDDMFGDISFLQGKFHLLPGTAVEEAEEDGSFDLPFQFTRTTTVCGRELPGGLSPLLKNAISLPVIGGPQALTLPTTQAPPKPPRLHLESPQPSPKSSPQEAGNVDIWRVPEAGLPHNGMSPEPEAEEPFLSHASSLLSLHVDLGPSILDDVLQIMDQDLGRVQIPT.

The residue at position 2 (Ser-2) is an N-acetylserine. The region spanning 30–44 is the CRIB domain; the sequence is ISPPLGDFRHTIHIG. Residues Ser-31, Ser-101, Ser-137, Ser-141, and Ser-145 each carry the phosphoserine modification. The segment at 118–151 is disordered; the sequence is ALTLPTTQAPPKPPRLHLESPQPSPKSSPQEAGN.

It belongs to the BORG/CEP family. Interacts with CDC42 and RHOQ, in a GTP-dependent manner, and with SEPT7.

Its subcellular location is the endomembrane system. The protein resides in the cytoplasm. The protein localises to the cytoskeleton. Probably involved in the organization of the actin cytoskeleton. May act downstream of CDC42 to induce actin filament assembly leading to cell shape changes. Induces pseudopodia formation in fibroblasts in a CDC42-dependent manner. In Rattus norvegicus (Rat), this protein is Cdc42 effector protein 2 (Cdc42ep2).